A 425-amino-acid polypeptide reads, in one-letter code: Dual-specificity RNA methyltransferase RlmN (425 aa).

Glu136 (proton acceptor) is an active-site residue. Residues 142-389 (GDDRGTLCVS…VRTPRGRDIL (248 aa)) form the Radical SAM core domain. A disulfide bridge connects residues Cys149 and Cys392. [4Fe-4S] cluster contacts are provided by Cys156, Cys160, and Cys163. Residues 218 to 219 (GE), Ser250, 272 to 274 (SLH), and Asn349 contribute to the S-adenosyl-L-methionine site. Cys392 (S-methylcysteine intermediate) is an active-site residue.

It belongs to the radical SAM superfamily. RlmN family. [4Fe-4S] cluster is required as a cofactor.

The protein resides in the cytoplasm. It catalyses the reaction adenosine(2503) in 23S rRNA + 2 reduced [2Fe-2S]-[ferredoxin] + 2 S-adenosyl-L-methionine = 2-methyladenosine(2503) in 23S rRNA + 5'-deoxyadenosine + L-methionine + 2 oxidized [2Fe-2S]-[ferredoxin] + S-adenosyl-L-homocysteine. The catalysed reaction is adenosine(37) in tRNA + 2 reduced [2Fe-2S]-[ferredoxin] + 2 S-adenosyl-L-methionine = 2-methyladenosine(37) in tRNA + 5'-deoxyadenosine + L-methionine + 2 oxidized [2Fe-2S]-[ferredoxin] + S-adenosyl-L-homocysteine. Specifically methylates position 2 of adenine 2503 in 23S rRNA and position 2 of adenine 37 in tRNAs. m2A2503 modification seems to play a crucial role in the proofreading step occurring at the peptidyl transferase center and thus would serve to optimize ribosomal fidelity. The sequence is that of Dual-specificity RNA methyltransferase RlmN from Methylorubrum populi (strain ATCC BAA-705 / NCIMB 13946 / BJ001) (Methylobacterium populi).